A 190-amino-acid polypeptide reads, in one-letter code: Dynactin subunit 6 (190 aa).

At threonine 186 the chain carries Phosphothreonine; by CDK1.

Belongs to the dynactin subunits 5/6 family. Dynactin subunit 6 subfamily. As to quaternary structure, subunit of dynactin, a multiprotein complex part of a tripartite complex with dynein and a adapter, such as BICDL1, BICD2 or HOOK3. The dynactin complex is built around ACTR1A/ACTB filament and consists of an actin-related filament composed of a shoulder domain, a pointed end and a barbed end. Its length is defined by its flexible shoulder domain. The soulder is composed of 2 DCTN1 subunits, 4 DCTN2 and 2 DCTN3. The 4 DCNT2 (via N-terminus) bind the ACTR1A filament and act as molecular rulers to determine the length. The pointed end is important for binding dynein-dynactin cargo adapters. Consists of 4 subunits: ACTR10, DCNT4, DCTN5 and DCTN6. Within the complex DCTN6 forms a heterodimer with DCTN5. The barbed end is composed of a CAPZA1:CAPZB heterodimers, which binds ACTR1A/ACTB filament and dynactin and stabilizes dynactin. Interacts with PLK1. Interacts with N4BP2L1. In terms of processing, phosphorylation at Thr-186 by CDK1 during mitotic prometaphase creates a binding site for PLK1 that facilitates its recruitment to kinetochores. Ubiquitous.

The protein localises to the cytoplasm. It is found in the cytoskeleton. Its subcellular location is the chromosome. It localises to the centromere. The protein resides in the kinetochore. Functionally, part of the dynactin complex that activates the molecular motor dynein for ultra-processive transport along microtubules. The sequence is that of Dynactin subunit 6 from Homo sapiens (Human).